The chain runs to 501 residues: Geissoschizine oxidase (501 aa).

Residues Met1–Val21 form a helical membrane-spanning segment. Residue Cys442 participates in heme binding.

The protein belongs to the cytochrome P450 family. Heme is required as a cofactor.

The protein localises to the membrane. The enzyme catalyses (19E)-geissoschizine + reduced [NADPH--hemoprotein reductase] + O2 = akuammicine + formate + oxidized [NADPH--hemoprotein reductase] + H2O + H(+). The protein operates within alkaloid biosynthesis. Its function is as follows. A cytochrome P450 monooxygenase involved in the biosynthesis of strychnos monoterpene indole alkaloids (MIAs) natural products, compounds with effects on glucose absorption. Catalyzes the conversion of geissoschizine to akuammicine. The protein is Geissoschizine oxidase of Alstonia scholaris (Dogbane).